Here is a 214-residue protein sequence, read N- to C-terminus: N-(5'-phosphoribosyl)anthranilate isomerase (214 aa).

The protein belongs to the TrpF family.

The catalysed reaction is N-(5-phospho-beta-D-ribosyl)anthranilate = 1-(2-carboxyphenylamino)-1-deoxy-D-ribulose 5-phosphate. The protein operates within amino-acid biosynthesis; L-tryptophan biosynthesis; L-tryptophan from chorismate: step 3/5. In Rhodospirillum centenum (strain ATCC 51521 / SW), this protein is N-(5'-phosphoribosyl)anthranilate isomerase.